The primary structure comprises 132 residues: Cliotide T2 (132 aa).

The first 28 residues, 1 to 28, serve as a signal peptide directing secretion; the sequence is MAYVRLTSLAVLFFLAASVMLNVKKTEG. The cyclopeptide (Gly-Asn) cross-link spans 29–58; that stretch reads GEFLKCGESCVQGECYTPGCSCDWPICKKN. Cystine bridges form between Cys34–Cys48, Cys38–Cys50, and Cys43–Cys55. The propeptide at 59-132 is removed in mature form; it reads HIIATNAKTV…NLKMPMTIIN (74 aa).

Post-translationally, this is a cyclic peptide. In terms of tissue distribution, expressed in flower, stem, shoot and pod but not in root, leaf, seed and nodule (at protein level).

Its function is as follows. Probably participates in a plant defense mechanism. Not active against Gram-negative bacteria E.coli ATCC 700926, K.pneumoniae ATTC 13883 and P.aeruginosa ATCC 39018 at concentration up to 100 uM. Has cytotoxic but no hemolytic activity. The polypeptide is Cliotide T2 (Clitoria ternatea (Butterfly pea)).